Reading from the N-terminus, the 250-residue chain is Ribosomal RNA small subunit methyltransferase J (250 aa).

S-adenosyl-L-methionine is bound by residues 101–102 (RD), 117–118 (ER), 153–154 (SS), and Asp-171.

It belongs to the methyltransferase superfamily. RsmJ family.

It localises to the cytoplasm. It catalyses the reaction guanosine(1516) in 16S rRNA + S-adenosyl-L-methionine = N(2)-methylguanosine(1516) in 16S rRNA + S-adenosyl-L-homocysteine + H(+). Functionally, specifically methylates the guanosine in position 1516 of 16S rRNA. The protein is Ribosomal RNA small subunit methyltransferase J of Shigella boydii serotype 18 (strain CDC 3083-94 / BS512).